Consider the following 865-residue polypeptide: Aconitate hydratase B (865 aa).

Substrate contacts are provided by residues Arg-191, 244 to 246 (SSR), 414 to 416 (QDT), and Ser-498. 3 residues coordinate [4Fe-4S] cluster: Cys-710, Cys-769, and Cys-772. Substrate-binding residues include Arg-791 and Arg-796.

The protein belongs to the aconitase/IPM isomerase family. Monomer. It depends on [4Fe-4S] cluster as a cofactor.

The catalysed reaction is citrate = D-threo-isocitrate. It catalyses the reaction (2S,3R)-3-hydroxybutane-1,2,3-tricarboxylate = 2-methyl-cis-aconitate + H2O. It functions in the pathway carbohydrate metabolism; tricarboxylic acid cycle; isocitrate from oxaloacetate: step 2/2. It participates in organic acid metabolism; propanoate degradation. Functionally, involved in the catabolism of short chain fatty acids (SCFA) via the tricarboxylic acid (TCA)(acetyl degradation route) and the 2-methylcitrate cycle I (propionate degradation route). Catalyzes the reversible isomerization of citrate to isocitrate via cis-aconitate. Also catalyzes the hydration of 2-methyl-cis-aconitate to yield (2R,3S)-2-methylisocitrate. The apo form of AcnB functions as a RNA-binding regulatory protein which regulates FliC synthesis via interaction with the ftsH transcript to decrease the intracellular levels of FtsH. The lower levels of FtsH protease activity then influence sigma-32, DnaK and ultimately FliC production. This chain is Aconitate hydratase B (acnB), found in Salmonella typhimurium (strain LT2 / SGSC1412 / ATCC 700720).